A 435-amino-acid polypeptide reads, in one-letter code: Palmitoyltransferase pfa4 (435 aa).

Topologically, residues 1-10 (MLCSSFSVSR) are cytoplasmic. A helical transmembrane segment spans residues 11–31 (LAIPAVCILIAFLAYTSQIFF). Residues 32–48 (LYFEDAPLKEDEVWRIN) are Lumenal-facing. Residues 49 to 69 (ILAICIWICYYRACTVDPGHV) traverse the membrane as a helical segment. The Cytoplasmic segment spans residues 70–129 (PKGWMPSDRERLKADRASGRQRWCRRCEAYKPPRAHHCKTCERCVPKMDHHCPWTSNCVS). One can recognise a DHHC domain in the interval 91 to 141 (RWCRRCEAYKPPRAHHCKTCERCVPKMDHHCPWTSNCVSHFTFPHFARFLF). Residue Cys-121 is the S-palmitoyl cysteine intermediate of the active site. Residues 130–150 (HFTFPHFARFLFYAVVGIAYL) traverse the membrane as a helical segment. The Lumenal portion of the chain corresponds to 151-179 (ETRLWQRVSKVWGSRHLPSYLGPSMGQIG). The helical transmembrane segment at 180 to 200 (HLFVLFVTNSLTLFALSLLLL) threads the bilayer. The Cytoplasmic portion of the chain corresponds to 201–435 (RTLWSLGSNT…QRAKRQHLSQ (235 aa)). The span at 359–368 (RKPFHVRLEE) shows a compositional bias: basic and acidic residues. Positions 359-408 (RKPFHVRLEEYSNGSSDAEADTGSDDDSDHGEEGWKNSEGERLRDFGVDE) are disordered. The segment covering 376 to 388 (AEADTGSDDDSDH) has biased composition (acidic residues). Residues 389–405 (GEEGWKNSEGERLRDFG) show a composition bias toward basic and acidic residues.

Belongs to the DHHC palmitoyltransferase family. PFA4 subfamily.

The protein resides in the endoplasmic reticulum membrane. The catalysed reaction is L-cysteinyl-[protein] + hexadecanoyl-CoA = S-hexadecanoyl-L-cysteinyl-[protein] + CoA. Its function is as follows. Mediates the reversible addition of palmitate to target proteins, thereby regulating their membrane association and biological function. The protein is Palmitoyltransferase pfa4 of Emericella nidulans (strain FGSC A4 / ATCC 38163 / CBS 112.46 / NRRL 194 / M139) (Aspergillus nidulans).